We begin with the raw amino-acid sequence, 235 residues long: Glucosamine-6-phosphate deaminase (235 aa).

The active-site Proton acceptor; for enolization step is the aspartate 62. Asparagine 128 serves as the catalytic For ring-opening step. The Proton acceptor; for ring-opening step role is filled by histidine 130. Glutamate 135 acts as the For ring-opening step in catalysis.

It belongs to the glucosamine/galactosamine-6-phosphate isomerase family. NagB subfamily.

The catalysed reaction is alpha-D-glucosamine 6-phosphate + H2O = beta-D-fructose 6-phosphate + NH4(+). It functions in the pathway amino-sugar metabolism; N-acetylneuraminate degradation; D-fructose 6-phosphate from N-acetylneuraminate: step 5/5. In terms of biological role, catalyzes the reversible isomerization-deamination of glucosamine 6-phosphate (GlcN6P) to form fructose 6-phosphate (Fru6P) and ammonium ion. In Lactococcus lactis subsp. lactis (strain IL1403) (Streptococcus lactis), this protein is Glucosamine-6-phosphate deaminase.